The chain runs to 174 residues: Protein SHI RELATED SEQUENCE 3 (174 aa).

Positions 9, 12, 20, 25, 29, and 36 each coordinate Zn(2+). Positions 9–36 (CEDCGNQAKKDCVYMRCRTCCKSKAFHC) form a DNA-binding region, zn(2)-C6 fungal-type; degenerate. The Required for homo- and heterodimerization motif lies at 110–113 (IGGH).

This sequence belongs to the SHI protein family.

The protein resides in the nucleus. Transcription activator that binds DNA on 5'-ACTCTAC-3' and promotes auxin homeostasis-regulating gene expression (e.g. YUC genes), as well as genes affecting stamen development, cell expansion and timing of flowering. Synergistically with other SHI-related proteins, regulates gynoecium, stamen and leaf development in a dose-dependent manner, controlling apical-basal patterning. Promotes style and stigma formation, and influences vascular development during gynoecium development. May also have a role in the formation and/or maintenance of the shoot apical meristem (SAM). The polypeptide is Protein SHI RELATED SEQUENCE 3 (SRS3) (Arabidopsis thaliana (Mouse-ear cress)).